Here is a 194-residue protein sequence, read N- to C-terminus: Peptidyl-tRNA hydrolase (194 aa).

A tRNA-binding site is contributed by Tyr17. The active-site Proton acceptor is His22. 3 residues coordinate tRNA: Tyr68, Asn70, and Asn116.

The protein belongs to the PTH family. As to quaternary structure, monomer.

It is found in the cytoplasm. The catalysed reaction is an N-acyl-L-alpha-aminoacyl-tRNA + H2O = an N-acyl-L-amino acid + a tRNA + H(+). Functionally, hydrolyzes ribosome-free peptidyl-tRNAs (with 1 or more amino acids incorporated), which drop off the ribosome during protein synthesis, or as a result of ribosome stalling. Catalyzes the release of premature peptidyl moieties from peptidyl-tRNA molecules trapped in stalled 50S ribosomal subunits, and thus maintains levels of free tRNAs and 50S ribosomes. This is Peptidyl-tRNA hydrolase from Pseudomonas putida (strain ATCC 700007 / DSM 6899 / JCM 31910 / BCRC 17059 / LMG 24140 / F1).